The chain runs to 648 residues: Biosynthetic arginine decarboxylase (648 aa).

At Lys-109 the chain carries N6-(pyridoxal phosphate)lysine. Position 291–301 (291–301 (IDVGGGLGIDF)) interacts with substrate.

Belongs to the Orn/Lys/Arg decarboxylase class-II family. SpeA subfamily. Mg(2+) serves as cofactor. The cofactor is pyridoxal 5'-phosphate.

It catalyses the reaction L-arginine + H(+) = agmatine + CO2. Its pathway is amine and polyamine biosynthesis; agmatine biosynthesis; agmatine from L-arginine: step 1/1. Functionally, catalyzes the biosynthesis of agmatine from arginine. The chain is Biosynthetic arginine decarboxylase from Prochlorococcus marinus (strain MIT 9215).